A 145-amino-acid chain; its full sequence is Basic phospholipase A2 GL1-1 (145 aa).

Positions 1 to 21 are cleaved as a signal peptide; that stretch reads MYPAHLLVLLAVCVSLLGASA. A propeptide spanning residues 22 to 27 is cleaved from the precursor; the sequence is IPPLPL. Intrachain disulfides connect C38/C98, C54/C144, C56/C72, C71/C125, C78/C118, C87/C111, and C105/C116. The Ca(2+) site is built by Y55, G57, and G59. The active site involves H75. A Ca(2+)-binding site is contributed by D76. Residue D119 is part of the active site.

This sequence belongs to the phospholipase A2 family. Group I subfamily. D49 sub-subfamily. Ca(2+) serves as cofactor. As to expression, expressed by the venom gland.

The protein localises to the secreted. It catalyses the reaction a 1,2-diacyl-sn-glycero-3-phosphocholine + H2O = a 1-acyl-sn-glycero-3-phosphocholine + a fatty acid + H(+). In terms of biological role, PLA2 catalyzes the calcium-dependent hydrolysis of the 2-acyl groups in 3-sn-phosphoglycerides. In Laticauda semifasciata (Black-banded sea krait), this protein is Basic phospholipase A2 GL1-1.